The chain runs to 797 residues: Calcium-transporting ATPase CtpE (797 aa).

The next 3 helical transmembrane spans lie at 55–75, 215–235, and 254–274; these read LLLI…LLII, ILQF…YTQL, and VPMV…VGVV. D301 (4-aspartylphosphate intermediate) is an active-site residue. 3 residues coordinate Mg(2+): D301, T303, and D536. The next 6 membrane-spanning stretches (helical) occupy residues 601–621, 633–653, 667–687, 703–723, 729–749, and 764–784; these read TVYS…AIPL, IHVT…LSLA, VMTS…VTYL, ASTA…AVIA, WRLA…SLPL, and TSIA…MWWI.

It belongs to the cation transport ATPase (P-type) (TC 3.A.3) family.

Its subcellular location is the cell membrane. The enzyme catalyses Ca(2+)(in) + ATP + H2O = Ca(2+)(out) + ADP + phosphate + H(+). P-type ATPase involved in specific uptake of calcium. This is Calcium-transporting ATPase CtpE (ctpE) from Mycobacterium bovis (strain ATCC BAA-935 / AF2122/97).